A 315-amino-acid chain; its full sequence is Gamma-hemolysin component C (315 aa).

A signal peptide spans 1-29; that stretch reads MLKNKILATTLSVSLLAPLANPLLENAKA.

This sequence belongs to the aerolysin family. Toxicity requires sequential binding and synergistic association of a class S and a class F component which form heterooligomeric complexes. HlgC (class S) associates with HlgB (class F) thus forming an CB toxin.

Its function is as follows. Toxin that seems to act by forming pores in the membrane of the cell. Has a hemolytic and a leucotoxic activity. This chain is Gamma-hemolysin component C (hlgC), found in Staphylococcus aureus (strain MSSA476).